A 38-amino-acid chain; its full sequence is MTPSLANFISSLTAGGLVVLTIAVALIVISRTDRVTRF.

A helical transmembrane segment spans residues 9 to 29; that stretch reads ISSLTAGGLVVLTIAVALIVI.

The protein belongs to the PsbX family. Type 1 subfamily. PSII is composed of 1 copy each of membrane proteins PsbA, PsbB, PsbC, PsbD, PsbE, PsbF, PsbH, PsbI, PsbJ, PsbK, PsbL, PsbM, PsbT, PsbX, PsbY, PsbZ, Psb30/Ycf12, at least 3 peripheral proteins of the oxygen-evolving complex and a large number of cofactors. It forms dimeric complexes.

It is found in the plastid. The protein localises to the chloroplast thylakoid membrane. In terms of biological role, involved in the binding and/or turnover of quinones at the Q(B) site of photosystem II (PSII). PSII is a light-driven water plastoquinone oxidoreductase, using light energy to abstract electrons from H(2)O, generating a proton gradient subsequently used for ATP formation. The protein is Photosystem II reaction center protein X of Trieres chinensis (Marine centric diatom).